We begin with the raw amino-acid sequence, 232 residues long: 7-cyano-7-deazaguanine synthase (232 aa).

ATP is bound at residue 7 to 17 (CSGGLDSVSLA). Residues Cys185, Cys193, Cys196, and Cys199 each contribute to the Zn(2+) site.

Belongs to the QueC family. Requires Zn(2+) as cofactor.

The catalysed reaction is 7-carboxy-7-deazaguanine + NH4(+) + ATP = 7-cyano-7-deazaguanine + ADP + phosphate + H2O + H(+). The protein operates within purine metabolism; 7-cyano-7-deazaguanine biosynthesis. In terms of biological role, catalyzes the ATP-dependent conversion of 7-carboxy-7-deazaguanine (CDG) to 7-cyano-7-deazaguanine (preQ(0)). The sequence is that of 7-cyano-7-deazaguanine synthase from Brucella anthropi (strain ATCC 49188 / DSM 6882 / CCUG 24695 / JCM 21032 / LMG 3331 / NBRC 15819 / NCTC 12168 / Alc 37) (Ochrobactrum anthropi).